We begin with the raw amino-acid sequence, 190 residues long: Selenoprotein S (190 aa).

The segment covering 1–13 has biased composition (basic and acidic residues); that stretch reads MEAEDGARVRNED. A disordered region spans residues 1–20; the sequence is MEAEDGARVRNEDVPPQNQD. The helical transmembrane segment at 30 to 50 threads the bilayer; it reads AFMSEYGWYLLFGCVGVYLLI. Residues 58–68 are compositionally biased toward low complexity; that stretch reads SSTQTRSSSGS. Residues 58–190 are disordered; sequence SSTQTRSSSG…RRGPSAGGUG (133 aa). Positions 79–120 are enriched in basic and acidic residues; the sequence is RRQEALEASRRRMQEEQDARAAEFREKQRMLEEEKRRQKIEM. Residues 136–151 show a composition bias toward polar residues; that stretch reads VAQQNTEEAASSSSLR. A non-standard amino acid (selenocysteine) is located at residue U189.

The protein belongs to the selenoprotein S family.

It is found in the endoplasmic reticulum membrane. The protein resides in the cytoplasm. Functionally, involved in the degradation process of misfolded endoplasmic reticulum (ER) luminal proteins. Participates in the transfer of misfolded proteins from the ER to the cytosol, where they are destroyed by the proteasome in a ubiquitin-dependent manner. This chain is Selenoprotein S (vimp), found in Danio rerio (Zebrafish).